Here is a 152-residue protein sequence, read N- to C-terminus: Deoxyuridine 5'-triphosphate nucleotidohydrolase (152 aa).

Residues R71–G73, N84, L88–D90, and M98 contribute to the substrate site.

It belongs to the dUTPase family. Mg(2+) is required as a cofactor.

It catalyses the reaction dUTP + H2O = dUMP + diphosphate + H(+). Its pathway is pyrimidine metabolism; dUMP biosynthesis; dUMP from dCTP (dUTP route): step 2/2. In terms of biological role, this enzyme is involved in nucleotide metabolism: it produces dUMP, the immediate precursor of thymidine nucleotides and it decreases the intracellular concentration of dUTP so that uracil cannot be incorporated into DNA. The protein is Deoxyuridine 5'-triphosphate nucleotidohydrolase of Citrobacter koseri (strain ATCC BAA-895 / CDC 4225-83 / SGSC4696).